A 98-amino-acid polypeptide reads, in one-letter code: Large ribosomal subunit protein bL21 (98 aa).

This sequence belongs to the bacterial ribosomal protein bL21 family. Part of the 50S ribosomal subunit. Contacts protein L20.

In terms of biological role, this protein binds to 23S rRNA in the presence of protein L20. The polypeptide is Large ribosomal subunit protein bL21 (Chloroherpeton thalassium (strain ATCC 35110 / GB-78)).